Consider the following 450-residue polypeptide: tRNA modification GTPase MnmE (450 aa).

3 residues coordinate (6S)-5-formyl-5,6,7,8-tetrahydrofolate: Arg25, Glu83, and Lys122. The TrmE-type G domain maps to 218–377 (GFKVAIIGKP…QMEALLDSIG (160 aa)). Asn228 is a binding site for K(+). Residues 228–233 (NVGKSS), 247–253 (SDIAGTT), and 272–275 (DTAG) contribute to the GTP site. A Mg(2+)-binding site is contributed by Ser232. K(+) is bound by residues Ser247, Ile249, and Thr252. Thr253 contacts Mg(2+). Residue Lys450 participates in (6S)-5-formyl-5,6,7,8-tetrahydrofolate binding.

Belongs to the TRAFAC class TrmE-Era-EngA-EngB-Septin-like GTPase superfamily. TrmE GTPase family. Homodimer. Heterotetramer of two MnmE and two MnmG subunits. K(+) is required as a cofactor.

The protein resides in the cytoplasm. In terms of biological role, exhibits a very high intrinsic GTPase hydrolysis rate. Involved in the addition of a carboxymethylaminomethyl (cmnm) group at the wobble position (U34) of certain tRNAs, forming tRNA-cmnm(5)s(2)U34. The chain is tRNA modification GTPase MnmE from Sulfurovum sp. (strain NBC37-1).